We begin with the raw amino-acid sequence, 551 residues long: Calcium-dependent protein kinase 3 (551 aa).

The tract at residues Met1–Lys57 is disordered. A lipid anchor (N-myristoyl glycine) is attached at Gly2. Positions Gly36–Gly55 are enriched in gly residues. One can recognise a Protein kinase domain in the interval Tyr77–Leu335. Residues Leu83–Thr91 and Lys106 contribute to the ATP site. Asp201 functions as the Proton acceptor in the catalytic mechanism. The tract at residues Ala341–Ile371 is autoinhibitory domain. EF-hand domains follow at residues Glu378–His413, Leu414–Met449, Ala450–Gly485, and Asp486–Trp521. Residues Asp391, Asp393, Asp395, Glu402, Asp427, Asn429, Glu438, Asp463, Asp465, Asn467, Tyr469, Glu474, Asp499, Asp501, Asp503, Lys505, and Glu510 each coordinate Ca(2+).

The protein belongs to the protein kinase superfamily. Ser/Thr protein kinase family. CDPK subfamily. In terms of tissue distribution, expressed in roots and developing seeds.

The protein localises to the membrane. It carries out the reaction L-seryl-[protein] + ATP = O-phospho-L-seryl-[protein] + ADP + H(+). The enzyme catalyses L-threonyl-[protein] + ATP = O-phospho-L-threonyl-[protein] + ADP + H(+). With respect to regulation, activated by calcium. Autophosphorylation may play an important role in the regulation of the kinase activity. Its function is as follows. May play a role in signal transduction pathways that involve calcium as a second messenger. The sequence is that of Calcium-dependent protein kinase 3 from Oryza sativa subsp. japonica (Rice).